The chain runs to 807 residues: Mechanosensitive cation channel TMEM63A (807 aa).

Residues 1-51 (MTDSPFLELWQSRAVSVREQLGLGDRPNDSYCYNSAKNSTVLQGVTFGGIP) are Extracellular-facing. An N-linked (GlcNAc...) asparagine glycan is attached at Asn38. A helical membrane pass occupies residues 52–74 (TVLLIDVSCFLFLILVFSIIRRR). The Cytoplasmic portion of the chain corresponds to 75-134 (FWDYGRIALVSEADSEPRFQRLSSTSSSGQQDFENELGCCPWLTAIFRLHDDQILEWCGE). Residues 135–167 (DAIHYLSFQRHIIFLLVVVSFLSLCVILPVNLS) form a helical membrane-spanning segment. Topologically, residues 168 to 191 (GDLLDKDPYSFGRTTIANLQTDND) are extracellular. A helical membrane pass occupies residues 192–217 (LLWLHTIFAVIYLFLTVGFMRHHTQS). The Cytoplasmic segment spans residues 218–416 (IKYKEENLVR…CWKNLSIQGL (199 aa)). The segment at 219-414 (KYKEENLVRR…DICWKNLSIQ (196 aa)) is intracellular linker IL2; confers mechanosensitivity. The chain crosses the membrane as a helical span at residues 417-444 (RWWLQWLGINFTLFLGLFFLTTPSIILS). At 445–462 (TMDKFNVTKPIHALNNPI) the chain is on the extracellular side. N-linked (GlcNAc...) asparagine glycosylation is present at Asn450. Residues 463–490 (ISQFFPTLLLWSFSALLPSIVYYSTLLE) form a helical membrane-spanning segment. The Cytoplasmic segment spans residues 491 to 495 (SHWTK). The helical transmembrane segment at 496-532 (SGENQIMMTKVYIFLIFMVLILPSLGLTSLDFFFRWL) threads the bilayer. Residues 533-554 (FDKTSSEASIRLECVFLPDQGA) lie on the Extracellular side of the membrane. A helical transmembrane segment spans residues 555 to 586 (FFVNYVIASAFIGNGMELLRLPGLILYTFRMI). The segment at 555–586 (FFVNYVIASAFIGNGMELLRLPGLILYTFRMI) is gating helix. The Cytoplasmic segment spans residues 587–606 (MAKTAADRRNVKQNQAFQYE). The helical transmembrane segment at 607–624 (FGAMYAWMLCVFTVIMAY) threads the bilayer. Topologically, residues 625-628 (SITC) are extracellular. The helical transmembrane segment at 629–651 (PIIAPFGLIYILLKHMVDRHNLY) threads the bilayer. Residues 652–661 (FIYLPAKLEK) are Cytoplasmic-facing. Residues 662–689 (GIHFAAVNQALAAPILCLFWLYFFSFLR) traverse the membrane as a helical segment. Residues 690-694 (LGMKA) lie on the Extracellular side of the membrane. The helical transmembrane segment at 695-709 (PATLFTFLVVLLTIL) threads the bilayer. Over 710 to 807 (VCLAHTCFGY…GSVAAAPQEA (98 aa)) the chain is Cytoplasmic. Ser739 carries the phosphoserine modification.

The protein belongs to the CSC1 (TC 1.A.17) family. In terms of assembly, monomer. Post-translationally, N-Glycosylated.

The protein resides in the lysosome membrane. It is found in the early endosome membrane. Its subcellular location is the cell membrane. It carries out the reaction Ca(2+)(in) = Ca(2+)(out). In terms of biological role, mechanosensitive cation channel with low conductance and high activation threshold. In contrast to TMEM63B, does not show phospholipid scramblase activity. Acts as a regulator of lysosomal morphology by mediating lysosomal mechanosensitivity. Important for the baby's first breath and respiration throughout life. Upon lung inflation conducts cation currents in alveolar type 1 and 2 cells triggering lamellar body exocytosis and surfactant secretion into airspace. Also acts as an osmosensitive cation channel preferentially activated by hypotonic stress. The chain is Mechanosensitive cation channel TMEM63A (TMEM63A) from Pongo abelii (Sumatran orangutan).